The primary structure comprises 342 residues: Methylthioribose-1-phosphate isomerase (342 aa).

Substrate contacts are provided by residues 49 to 51, R86, and Q187; that span reads RGA. The Proton donor role is filled by D228. Position 238 to 239 (238 to 239) interacts with substrate; that stretch reads NK.

Belongs to the eIF-2B alpha/beta/delta subunits family. MtnA subfamily.

The catalysed reaction is 5-(methylsulfanyl)-alpha-D-ribose 1-phosphate = 5-(methylsulfanyl)-D-ribulose 1-phosphate. The protein operates within amino-acid biosynthesis; L-methionine biosynthesis via salvage pathway; L-methionine from S-methyl-5-thio-alpha-D-ribose 1-phosphate: step 1/6. Functionally, catalyzes the interconversion of methylthioribose-1-phosphate (MTR-1-P) into methylthioribulose-1-phosphate (MTRu-1-P). The sequence is that of Methylthioribose-1-phosphate isomerase from Klebsiella pneumoniae (strain 342).